We begin with the raw amino-acid sequence, 180 residues long: Bifunctional protein PyrR 1 (180 aa).

Substrate is bound by residues 39-40, 103-111, Arg136, and Val160; these read TR and DDVLFTGRT. The short motif at 99–111 is the PRPP-binding element; the sequence is VILVDDVLFTGRT.

Belongs to the purine/pyrimidine phosphoribosyltransferase family. PyrR subfamily. As to quaternary structure, homodimer and homohexamer; in equilibrium.

The catalysed reaction is UMP + diphosphate = 5-phospho-alpha-D-ribose 1-diphosphate + uracil. Functionally, regulates transcriptional attenuation of the pyrimidine nucleotide (pyr) operon by binding in a uridine-dependent manner to specific sites on pyr mRNA. This disrupts an antiterminator hairpin in the RNA and favors formation of a downstream transcription terminator, leading to a reduced expression of downstream genes. Also displays a weak uracil phosphoribosyltransferase activity which is not physiologically significant. The sequence is that of Bifunctional protein PyrR 1 (pyrR1) from Lactiplantibacillus plantarum (strain ATCC BAA-793 / NCIMB 8826 / WCFS1) (Lactobacillus plantarum).